Reading from the N-terminus, the 1473-residue chain is DNA topoisomerase 2 (1473 aa).

Positions 1–20 (MATKLPLQNSNAANVAKAPA) are disordered. A compositionally biased stretch (low complexity) spans 9-20 (NSNAANVAKAPA). ATP-binding positions include Asn91, Asn120, 148–150 (SSN), and 161–168 (GRNGYGAK). The tract at residues 345–347 (NKK) is interaction with DNA. 378–380 (QTK) is an ATP binding site. Residues 455-569 (CTLILTEGDS…SLLQVPSFLV (115 aa)) enclose the Toprim domain. Residues Glu461, Asp538, and Asp540 each coordinate Mg(2+). Positions 704-1163 (IPSMVDGLKP…TPKSLWLSDL (460 aa)) constitute a Topo IIA-type catalytic domain. Tyr794 (O-(5'-phospho-DNA)-tyrosine intermediate) is an active-site residue. The interval 980–989 (KLTTTIATSN) is interaction with DNA. Disordered stretches follow at residues 1195–1230 (SGAA…SYSA), 1242–1297 (KPKA…EVEE), and 1313–1473 (GSAP…EDDE). Basic residues-rich tracts occupy residues 1200-1216 (KVKR…KTTK) and 1278-1288 (PKGRQGAKKKA). A compositionally biased stretch (low complexity) spans 1351-1360 (KPAATKAAKP). 2 stretches are compositionally biased toward polar residues: residues 1394 to 1404 (SPFNKKSSSVM) and 1417 to 1427 (ENVAGNSSSEK). Residues 1453 to 1473 (SESESANDSEFDDIEDDEDDE) are compositionally biased toward acidic residues.

The protein belongs to the type II topoisomerase family. In terms of assembly, homodimer. The cofactor is Mg(2+). Mn(2+) is required as a cofactor. Ca(2+) serves as cofactor.

It carries out the reaction ATP-dependent breakage, passage and rejoining of double-stranded DNA.. In terms of biological role, control of topological states of DNA by transient breakage and subsequent rejoining of DNA strands. Topoisomerase II makes double-strand breaks. The polypeptide is DNA topoisomerase 2 (TOP2) (Arabidopsis thaliana (Mouse-ear cress)).